A 509-amino-acid chain; its full sequence is 2,3-bisphosphoglycerate-independent phosphoglycerate mutase (509 aa).

Mn(2+) contacts are provided by Asp-13 and Ser-63. Catalysis depends on Ser-63, which acts as the Phosphoserine intermediate. Substrate-binding positions include His-124, 154–155, Arg-186, Arg-192, 261–264, and Lys-335; these read RD and RPDR. Residues Asp-400, His-404, Asp-441, His-442, and His-459 each coordinate Mn(2+).

Belongs to the BPG-independent phosphoglycerate mutase family. In terms of assembly, monomer. Requires Mn(2+) as cofactor.

It catalyses the reaction (2R)-2-phosphoglycerate = (2R)-3-phosphoglycerate. It participates in carbohydrate degradation; glycolysis; pyruvate from D-glyceraldehyde 3-phosphate: step 3/5. Catalyzes the interconversion of 2-phosphoglycerate and 3-phosphoglycerate. The polypeptide is 2,3-bisphosphoglycerate-independent phosphoglycerate mutase (Desulforudis audaxviator (strain MP104C)).